A 301-amino-acid chain; its full sequence is Acetaldehyde dehydrogenase (301 aa).

The active-site Acyl-thioester intermediate is Cys-130. Residues 161–169 (SVGPGTRRN) and Asn-272 each bind NAD(+).

It belongs to the acetaldehyde dehydrogenase family.

The enzyme catalyses acetaldehyde + NAD(+) + CoA = acetyl-CoA + NADH + H(+). The chain is Acetaldehyde dehydrogenase (mhpF) from Cupriavidus taiwanensis (strain DSM 17343 / BCRC 17206 / CCUG 44338 / CIP 107171 / LMG 19424 / R1) (Ralstonia taiwanensis (strain LMG 19424)).